Here is a 559-residue protein sequence, read N- to C-terminus: MTTPSKFRDIEIRAPRGTTLTAKSWLTEAPLRMLMNNLDPEVAENPRELVVYGGIGRAARNWECYDRIVETLKQLNDDETLLVQSGKPVGVFKTHANAPRVLIANSNLVPHWATWEHFNELDAKGLAMYGQMTAGSWIYIGSQGIVQGTYETFVEAGRQHYDGNLKGRWVLTAGLGGMGGAQPLAATLAGACSLNIECQQSRIDFRLRSRYVDEQAKDLDDALARIQRYTAEGKAISIALLGNAAEILPELVRRGVRPDMVTDQTSAHDPLNGYLPAGWSWEEYRDRAQTDPAAVVKAAKQSMAVHVRAMLAFQQQGVPTFDYGNNIRQMAKEEGVANAFDFPGFVPAYIRPLFCRGIGPFRWAALSGDPQDIYKTDAKVKQLIPDDAHLHRWLDMARERISFQGLPARICWVGLGLRAKLGLAFNEMVRTGELSAPIVIGRDHLDSGSVASPNRETEAMQDGSDAVSDWPLLNALLNTASGATWVSLHHGGGVGMGFSQHSGMVIVCDGSDEAAERIARVLTNDPGTGVMRHADAGYQVAIDCAKEQGLNLPMITAQR.

NAD(+) contacts are provided by residues Gly53–Gly54, Gln131, Gly177–Gly179, Glu197, Arg202, Asn243–Ala244, Gln264–His268, Tyr274–Leu275, and Tyr323. Cys411 is an active-site residue. Gly493 lines the NAD(+) pocket.

Belongs to the urocanase family. The cofactor is NAD(+).

The protein localises to the cytoplasm. It carries out the reaction 4-imidazolone-5-propanoate = trans-urocanate + H2O. It functions in the pathway amino-acid degradation; L-histidine degradation into L-glutamate; N-formimidoyl-L-glutamate from L-histidine: step 2/3. Its function is as follows. Catalyzes the conversion of urocanate to 4-imidazolone-5-propionate. The sequence is that of Urocanate hydratase from Pseudomonas aeruginosa (strain ATCC 15692 / DSM 22644 / CIP 104116 / JCM 14847 / LMG 12228 / 1C / PRS 101 / PAO1).